We begin with the raw amino-acid sequence, 205 residues long: UPF0111 protein YkaA (205 aa).

This sequence belongs to the UPF0111 family.

The sequence is that of UPF0111 protein YkaA (ykaA) from Bacillus subtilis (strain 168).